Here is a 134-residue protein sequence, read N- to C-terminus: Aspartate 1-decarboxylase (134 aa).

The active-site Schiff-base intermediate with substrate; via pyruvic acid is serine 25. Serine 25 is modified (pyruvic acid (Ser)). Threonine 57 contacts substrate. The Proton donor role is filled by tyrosine 58. 73–75 (GAA) provides a ligand contact to substrate.

The protein belongs to the PanD family. Heterooctamer of four alpha and four beta subunits. The cofactor is pyruvate. Is synthesized initially as an inactive proenzyme, which is activated by self-cleavage at a specific serine bond to produce a beta-subunit with a hydroxyl group at its C-terminus and an alpha-subunit with a pyruvoyl group at its N-terminus.

It is found in the cytoplasm. It catalyses the reaction L-aspartate + H(+) = beta-alanine + CO2. It participates in cofactor biosynthesis; (R)-pantothenate biosynthesis; beta-alanine from L-aspartate: step 1/1. Its function is as follows. Catalyzes the pyruvoyl-dependent decarboxylation of aspartate to produce beta-alanine. The polypeptide is Aspartate 1-decarboxylase (Citrifermentans bemidjiense (strain ATCC BAA-1014 / DSM 16622 / JCM 12645 / Bem) (Geobacter bemidjiensis)).